A 311-amino-acid polypeptide reads, in one-letter code: tRNA(Ile)-lysidine synthase (311 aa).

32–37 (SGGPDS) is a binding site for ATP.

This sequence belongs to the tRNA(Ile)-lysidine synthase family.

The protein resides in the cytoplasm. It catalyses the reaction cytidine(34) in tRNA(Ile2) + L-lysine + ATP = lysidine(34) in tRNA(Ile2) + AMP + diphosphate + H(+). Functionally, ligates lysine onto the cytidine present at position 34 of the AUA codon-specific tRNA(Ile) that contains the anticodon CAU, in an ATP-dependent manner. Cytidine is converted to lysidine, thus changing the amino acid specificity of the tRNA from methionine to isoleucine. This is tRNA(Ile)-lysidine synthase from Cutibacterium acnes (strain DSM 16379 / KPA171202) (Propionibacterium acnes).